Reading from the N-terminus, the 565-residue chain is Coiled-coil domain-containing protein 17 (565 aa).

The interval 58–87 (IMAQEKSRDQEASTSALKRLTEETAGSPGE) is disordered. 2 coiled-coil regions span residues 97-160 (ARRM…TLGA) and 219-271 (LQLQ…KVLS).

This chain is Coiled-coil domain-containing protein 17 (Ccdc17), found in Mus musculus (Mouse).